The primary structure comprises 186 residues: MASSMLSNAAVATTAASRSAGAQASMVAPFTGLKSVSAFPVTRKSSNDLSTVPSNGGKVQCMQVWPPLGKKKFETLSYLPPLSEESLLKEVQYLLNNGWVPCLEFEPTHGFVYREHGNTPGYYDGRYWTMWKLPMFGCTDPSQVVAELEEAKKAYPEAFIRIIGFDNVRQVQCVSFIAYKPASYDA.

The N-terminal 60 residues, 1 to 60, are a transit peptide targeting the chloroplast; that stretch reads MASSMLSNAAVATTAASRSAGAQASMVAPFTGLKSVSAFPVTRKSSNDLSTVPSNGGKVQ.

The protein belongs to the RuBisCO small chain family. Heterohexadecamer of 8 large and 8 small subunits.

It is found in the plastid. It localises to the chloroplast. Its function is as follows. RuBisCO catalyzes two reactions: the carboxylation of D-ribulose 1,5-bisphosphate, the primary event in carbon dioxide fixation, as well as the oxidative fragmentation of the pentose substrate. Both reactions occur simultaneously and in competition at the same active site. Although the small subunit is not catalytic it is essential for maximal activity. This is Ribulose bisphosphate carboxylase small subunit, chloroplastic 6 from Mesembryanthemum crystallinum (Common ice plant).